The chain runs to 114 residues: UPF0339 protein plu2779 (114 aa).

2 repeat units span residues 11–59 (TKNK…NFEI) and 62–110 (NKSG…VRDL).

The protein belongs to the UPF0339 family. Duplicated subfamily.

The protein is UPF0339 protein plu2779 of Photorhabdus laumondii subsp. laumondii (strain DSM 15139 / CIP 105565 / TT01) (Photorhabdus luminescens subsp. laumondii).